The following is a 314-amino-acid chain: Short-chain dehydrogenase/reductase drtF (314 aa).

Residues Val-26, Lys-50, Asp-73, Asn-100, Tyr-185, and Lys-189 each coordinate NADP(+). Catalysis depends on Tyr-185, which acts as the Proton acceptor. The active-site Lowers pKa of active site Tyr is the Lys-189.

The protein belongs to the short-chain dehydrogenases/reductases (SDR) family.

The protein operates within secondary metabolite biosynthesis; terpenoid biosynthesis. Short-chain dehydrogenase/reductase; part of the gene cluster that mediates the biosynthesis of various drimane-type sesquiterpene esters, compounds that exhibit diverse biological activities and are widely present in eukaryotes. The pathway begins with the synthesis of the backbone drimenol by the terpene cyclase drtB using farnesyl pyrophosphate (FPP) as substrate. The cytochrome P450 monooxygenase drtD is then responsible for the hydroxylations at C-6, C-9 and C-12, as well as the oxidation of hydroxyl groups at C-6 and C-11 to a ketone and an aldehyde, respectively. Then, the biosynthesis can go in two directions, either the hydroxylated drimenol is further hydroxylated at C-2 and C-3 by an enzyme(s) not associated with the drt cluster, or the FAD-binding oxidoreductase drtC further oxidizes C-11 or C-12 to form the butyrolactone ring. DrtB, drtD and drtC are solely responsible for the formation of the different drimane structures observed during drimane sesquiterpenes biosynthesis. The polyketide synthase drtA synthesizes different lengths (C6 and C8) of PKS chains, which are then oxidized to varying degrees by the short-chain dehydrogenase drtF. Finally, these PKS chains are transferred onto drimane sesquiterpenes by the acyltransferase drtE, forming the sesquiterpene esters. In addition to the different fatty acyl-CoA chains produced by drtA, drtE is also able to use cinnamoyl-CoA as a substrate. This Aspergillus calidoustus protein is Short-chain dehydrogenase/reductase drtF.